The chain runs to 348 residues: 4-hydroxy-2-oxovalerate aldolase 2 (348 aa).

Positions 5-256 constitute a Pyruvate carboxyltransferase domain; sequence LQICDSTLRD…EARIKLFDAL (252 aa). 13–14 provides a ligand contact to substrate; sequence RD. Asp-14 is a Mn(2+) binding site. His-17 acts as the Proton acceptor in catalysis. Residues Ser-168 and His-195 each coordinate substrate. Residues His-195 and His-197 each contribute to the Mn(2+) site.

The protein belongs to the 4-hydroxy-2-oxovalerate aldolase family.

It catalyses the reaction (S)-4-hydroxy-2-oxopentanoate = acetaldehyde + pyruvate. In Salinispora arenicola (strain CNS-205), this protein is 4-hydroxy-2-oxovalerate aldolase 2.